Consider the following 210-residue polypeptide: Methylthioribulose-1-phosphate dehydratase (210 aa).

Residues His-94 and His-96 each coordinate Zn(2+).

It belongs to the aldolase class II family. MtnB subfamily. Zn(2+) is required as a cofactor.

The enzyme catalyses 5-(methylsulfanyl)-D-ribulose 1-phosphate = 5-methylsulfanyl-2,3-dioxopentyl phosphate + H2O. It functions in the pathway amino-acid biosynthesis; L-methionine biosynthesis via salvage pathway; L-methionine from S-methyl-5-thio-alpha-D-ribose 1-phosphate: step 2/6. Its function is as follows. Catalyzes the dehydration of methylthioribulose-1-phosphate (MTRu-1-P) into 2,3-diketo-5-methylthiopentyl-1-phosphate (DK-MTP-1-P). The chain is Methylthioribulose-1-phosphate dehydratase from Yersinia enterocolitica serotype O:8 / biotype 1B (strain NCTC 13174 / 8081).